The sequence spans 182 residues: uncharacterized protein (182 aa).

The tract at residues 40 to 182 is disordered; the sequence is LLKTDDDDDD…EEIQRNQKGN (143 aa). Residues 52–86 show a composition bias toward low complexity; that stretch reads NNININNNNATITTTSTTTTTTTTSTTKTFTISTD. Acidic residues predominate over residues 87-100; it reads NYDEDVNDDQDEGD. Composition is skewed to low complexity over residues 104 to 134 and 148 to 157; these read NNNN…NNNN and DLDFNNQNNN. Positions 165-182 are enriched in basic and acidic residues; the sequence is FLSKDDNIEEIQRNQKGN.

This is an uncharacterized protein from Dictyostelium discoideum (Social amoeba).